Reading from the N-terminus, the 600-residue chain is Proline--tRNA ligase (600 aa).

The protein belongs to the class-II aminoacyl-tRNA synthetase family. ProS type 1 subfamily. Homodimer.

It is found in the cytoplasm. The enzyme catalyses tRNA(Pro) + L-proline + ATP = L-prolyl-tRNA(Pro) + AMP + diphosphate. Its function is as follows. Catalyzes the attachment of proline to tRNA(Pro) in a two-step reaction: proline is first activated by ATP to form Pro-AMP and then transferred to the acceptor end of tRNA(Pro). As ProRS can inadvertently accommodate and process non-cognate amino acids such as alanine and cysteine, to avoid such errors it has two additional distinct editing activities against alanine. One activity is designated as 'pretransfer' editing and involves the tRNA(Pro)-independent hydrolysis of activated Ala-AMP. The other activity is designated 'posttransfer' editing and involves deacylation of mischarged Ala-tRNA(Pro). The misacylated Cys-tRNA(Pro) is not edited by ProRS. The chain is Proline--tRNA ligase from Prochlorococcus marinus (strain MIT 9301).